A 57-amino-acid chain; its full sequence is Exactin (57 aa).

4 cysteine pairs are disulfide-bonded: Cys-3/Cys-19, Cys-12/Cys-37, Cys-41/Cys-49, and Cys-50/Cys-55.

It belongs to the three-finger toxin family. Short-chain subfamily. Orphan group XX sub-subfamily. Expressed by the venom gland.

It localises to the secreted. Functionally, anticoagulant protein that prevents the activation of factor X (F10). It acts by potently inhibiting the extrinsic tenase complex (ETC) (IC(50)=116.49 nM), a complex composed by active factor VII (F7a), tissue factor (TF) and F10. In addition, it shows weaker activities on other complexes. It weakly inhibits F10 activation by inhibiting the intrinsic tenase complex (IC(50)=4.05 uM), a complex composed by active factor IX (IXa, F9a), its cofactor factor VIII (VIIIa, F8a), and their substrate F10. It also weakly prevents prothrombin activation by inhibiting the prothrombinase complex (IC(50)=17.66 uM). It shows high kinetic constant towards F7a/TF/F10/phospholipids complex (Ki=30.62 nM) and lower kinetic constant towards F7a/TF/phospholipids complex (Ki=153.75 nM). The protein is Exactin of Hemachatus haemachatus (Rinkhals).